A 755-amino-acid chain; its full sequence is MTTTPKEREPKVKVSVDIDPVPTSFEKWAKPGHFDRSLARGPKTTTWIWNLHALAHDFDSHTSDLEDVSRKIFSAHFGHLAVVFVWLSGMYYHGAQFSNYSAWLADPINIKPSAQVVWPIFGQEILNGDVGGGFEGIRITSGLFHLWRAAGITNEFQLLCTAIGGLVMAGLCLFAGWFHYHKRAPKLEWFQNVESMLNHHLAGLLGLGSLAWAGHQIHVAIPINKMLDAGVPAAQIPLPHEFILKPALMKEMFPSVDWGLFSGVVPFFTLDWGKYAEFLTFKGGLDPQTGALWLTDQAHHHLAIAVLFIVAGHMYRTNWGIGHSIKEILEAHKGPFTGEGHKGLYEVLTSSWHAQLAINLAMVGSLSIIVAQHMYAMNPYPYMGIDYATQISLFTHHMWIGGIFIVGGAAHGAIYMVRDYDPAVNRNNVLDRVIRHRDAIISHLNWVCLFLGFHAFGFYVHNDTMQALGRPQDMFSDTGIQLQPIFAQWIQSLHTKAIASTAPYVGASVSPIFGGDVVAVGGKVSMMPMVLGTADFMVHHIHAMTIHITVLILLKGVLFARSSRLIPDKAKLGFRFPCDGPGRGGTCQVSGWDHVFLGLFWMYNAISIVIFHFSWKMQSDIWGTVNPDGTIEHITGGNFATSAININGWLRDFLWAQSVQVINSYGSELSAYGLLFLGAHFVWAFSLMFLFSGRGYWQELIESIVWAHNKLKVAPAIQPRALSIIQGRAVGVAHYLLGGIVTTWAFFLARFAALG.

Transmembrane regions (helical) follow at residues 72 to 95, 158 to 181, 197 to 221, 297 to 315, 352 to 375, 391 to 417, 439 to 461, and 536 to 554; these read IFSA…YHGA, LLCT…FHYH, LNHH…HVAI, QAHH…GHMY, WHAQ…QHMY, ISLF…IYMV, AIIS…FYVH, and FMVH…LILL. [4Fe-4S] cluster-binding residues include Cys578 and Cys587. 2 consecutive transmembrane segments (helical) span residues 594–615 and 669–691; these read HVFL…HFSW and LSAY…MFLF. Position 680 (His680) interacts with chlorophyll a'. Residues Met688 and Tyr696 each coordinate chlorophyll a. Phylloquinone is bound at residue Trp697. Residues 729–749 form a helical membrane-spanning segment; sequence AVGVAHYLLGGIVTTWAFFLA.

Belongs to the PsaA/PsaB family. As to quaternary structure, the PsaA/B heterodimer binds the P700 chlorophyll special pair and subsequent electron acceptors. PSI consists of a core antenna complex that captures photons, and an electron transfer chain that converts photonic excitation into a charge separation. The cyanobacterial PSI reaction center is composed of one copy each of PsaA,B,C,D,E,F,I,J,K,L,M and X, and forms trimeric complexes. Requires PSI electron transfer chain: 5 chlorophyll a, 1 chlorophyll a', 2 phylloquinones and 3 4Fe-4S clusters. PSI core antenna: 90 chlorophyll a, 22 carotenoids, 3 phospholipids and 1 galactolipid. P700 is a chlorophyll a/chlorophyll a' dimer, A0 is one or more chlorophyll a, A1 is one or both phylloquinones and FX is a shared 4Fe-4S iron-sulfur center. as cofactor.

The protein localises to the cellular thylakoid membrane. It catalyses the reaction reduced [plastocyanin] + hnu + oxidized [2Fe-2S]-[ferredoxin] = oxidized [plastocyanin] + reduced [2Fe-2S]-[ferredoxin]. In terms of biological role, psaA and PsaB bind P700, the primary electron donor of photosystem I (PSI), as well as the electron acceptors A0, A1 and FX. PSI is a plastocyanin/cytochrome c6-ferredoxin oxidoreductase, converting photonic excitation into a charge separation, which transfers an electron from the donor P700 chlorophyll pair to the spectroscopically characterized acceptors A0, A1, FX, FA and FB in turn. Oxidized P700 is reduced on the lumenal side of the thylakoid membrane by plastocyanin or cytochrome c6. This is Photosystem I P700 chlorophyll a apoprotein A1 from Synechococcus sp. (strain JA-3-3Ab) (Cyanobacteria bacterium Yellowstone A-Prime).